Consider the following 235-residue polypeptide: Large ribosomal subunit protein uL1 (235 aa).

It belongs to the universal ribosomal protein uL1 family. As to quaternary structure, part of the 50S ribosomal subunit.

Binds directly to 23S rRNA. The L1 stalk is quite mobile in the ribosome, and is involved in E site tRNA release. Its function is as follows. Protein L1 is also a translational repressor protein, it controls the translation of the L11 operon by binding to its mRNA. The protein is Large ribosomal subunit protein uL1 of Rhodospirillum centenum (strain ATCC 51521 / SW).